Reading from the N-terminus, the 761-residue chain is MATINDIGVAAAINIVTAFAFLLAFAIFRIQPVNDRVYFPKWYLKGLRSSSIQTGGFGSKFINLDFRSYIRFLNWMPEALKMPEPELVDHAGLDSVVYLRIYLLGLKIFFPIACVAFTTMVPVNWTNKGLDRLRHSNISFSDIDKLSLSNIPNGSPRFWVHLCMAYAITFWTCFILKREYQNIALMRLQFLANDQRRPNQFTVLVRNIPADPHESICELVEHFFKVNHPDHYLTFQAVHDATKLSELVLTRKQMQNLLDYNINKHMRNLSNRPVIKMGFLGCCGEEADGIKYYTSVVEGLTREISEEKQRLRTGTKSIVPAAFVSFKSRWGAAVCAQTQQTRNPTEWLTEWAAEPRDIYYDNLALPYVDLKIRRLIVGVAYFFLTFFFMIPIAFVQSLANIEGIEKAFPFLKPLIEVKLLKSIIQGFLPGIALKIFLLFLPRILMQMSKFEGFVSTSSLERRAATRFYMFQFINVFLGSIVTGTAFQQLNSFLNQSANDIPKTIGVSIPMKATFFITYIMVDGWAGVAGEILRLKPLIIYHLKNSFLVRTEKDREEATDPGTIGFNTGEPQIQLYFLLGLVYAAVSPILLPFILVFFGLAFVVYRHQVINVYNQKYESAGKFWPDVHRRVVTALVVSQLLLMGLLSTKHASKSTPLLLVLPLLTIGFHKHCKNRYQPAFVTYPLQQEAMIKDTLDRIREPNLNLKAFLRDAYAHPEFRVGEDPEPEEKLESDMSPPDLVATKRWSWRNTPLPSKDSCREIP.

Helical transmembrane passes span 7–27, 101–121, 156–176, 375–395, 419–439, 467–487, 512–532, 583–603, 630–650, and 653–673; these read IGVAAAINIVTAFAFLLAFAI, IYLLGLKIFFPIACVAFTTMV, PRFWVHLCMAYAITFWTCFIL, LIVGVAYFFLTFFFMIPIAFV, LLKSIIQGFLPGIALKIFLLF, FYMFQFINVFLGSIVTGTAFQ, ATFFITYIMVDGWAGVAGEIL, AAVSPILLPFILVFFGLAFVV, VVTALVVSQLLLMGLLSTKHA, and STPLLLVLPLLTIGFHKHCKN. Positions 718 to 731 are enriched in basic and acidic residues; that stretch reads RVGEDPEPEEKLES. The disordered stretch occupies residues 718 to 761; the sequence is RVGEDPEPEEKLESDMSPPDLVATKRWSWRNTPLPSKDSCREIP.

This sequence belongs to the CSC1 (TC 1.A.17) family.

The protein localises to the membrane. Its function is as follows. Acts as an osmosensitive calcium-permeable cation channel. The sequence is that of Hyperosmolality-gated Ca2+ permeable channel 1.6 from Arabidopsis thaliana (Mouse-ear cress).